Reading from the N-terminus, the 74-residue chain is U-actitoxin-Bgr3a (74 aa).

The first 21 residues, 1–21, serve as a signal peptide directing secretion; it reads MSAQRFLFLLVVTSLIAASLA. A propeptide spanning residues 22-29 is cleaved from the precursor; it reads APKDVQLT. Disulfide bonds link cysteine 35–cysteine 68, cysteine 37–cysteine 61, and cysteine 51–cysteine 69.

This sequence belongs to the sea anemone type 3 (BDS) potassium channel toxin family.

It is found in the secreted. The protein resides in the nematocyst. Functionally, potently and selectively inhibits voltage-gated potassium channels Kv11/KCNH/ERG. Acts as a gating-modifier toxin that shifts the voltage-dependence of ERG activation in the positive direction and suppresses its current amplitudes elicited by strong depolarizing pulses that maximally activate the channels. This Bunodosoma granuliferum (Red warty sea anemone) protein is U-actitoxin-Bgr3a.